Consider the following 154-residue polypeptide: Myoglobin (154 aa).

The Globin domain occupies 2–148; the sequence is GLSDGEWQIV…FRNDIAAKYK (147 aa). A Phosphoserine modification is found at Ser-4. His-65 serves as a coordination point for nitrite. His-65 lines the O2 pocket. Thr-68 is subject to Phosphothreonine. A heme b-binding site is contributed by His-94.

This sequence belongs to the globin family. As to quaternary structure, monomeric.

It localises to the cytoplasm. Its subcellular location is the sarcoplasm. It catalyses the reaction Fe(III)-heme b-[protein] + nitric oxide + H2O = Fe(II)-heme b-[protein] + nitrite + 2 H(+). It carries out the reaction H2O2 + AH2 = A + 2 H2O. Its function is as follows. Monomeric heme protein which primary function is to store oxygen and facilitate its diffusion within muscle tissues. Reversibly binds oxygen through a pentacoordinated heme iron and enables its timely and efficient release as needed during periods of heightened demand. Depending on the oxidative conditions of tissues and cells, and in addition to its ability to bind oxygen, it also has a nitrite reductase activity whereby it regulates the production of bioactive nitric oxide. Under stress conditions, like hypoxia and anoxia, it also protects cells against reactive oxygen species thanks to its pseudoperoxidase activity. The sequence is that of Myoglobin (MB) from Canis lupus familiaris (Dog).